The primary structure comprises 465 residues: UDP-N-acetylmuramate--L-alanine ligase (465 aa).

112–118 (GTHGKTT) provides a ligand contact to ATP.

It belongs to the MurCDEF family.

The protein resides in the cytoplasm. The catalysed reaction is UDP-N-acetyl-alpha-D-muramate + L-alanine + ATP = UDP-N-acetyl-alpha-D-muramoyl-L-alanine + ADP + phosphate + H(+). The protein operates within cell wall biogenesis; peptidoglycan biosynthesis. Functionally, cell wall formation. The protein is UDP-N-acetylmuramate--L-alanine ligase of Burkholderia cenocepacia (strain ATCC BAA-245 / DSM 16553 / LMG 16656 / NCTC 13227 / J2315 / CF5610) (Burkholderia cepacia (strain J2315)).